The following is an 863-amino-acid chain: Oleate activated transcription factor 3 (863 aa).

Positions 18-47 form a DNA-binding region, zn(2)-C6 fungal-type; sequence VCTNCKKRKSKCDRTKPCGTCVRLGDVDSC. The span at 52 to 63 shows a compositional bias: polar residues; it reads DSSGQPESSPSL. Residues 52-99 form a disordered region; the sequence is DSSGQPESSPSLNDADPLRKQSTPAERISPGFIKKRRSSQTRQDEDHW.

Belongs to the OAF3 family.

It is found in the cytoplasm. The protein localises to the nucleus. Its subcellular location is the mitochondrion. Transcriptional inhibitor with a significantly increased number of target genes in response to oleate. This Saccharomyces cerevisiae (strain ATCC 204508 / S288c) (Baker's yeast) protein is Oleate activated transcription factor 3 (OAF3).